The following is an 853-amino-acid chain: Dynamin-A (853 aa).

Residues 22 to 296 (PLDLPQIVVV…LMFHIRDTLP (275 aa)) form the Dynamin-type G domain. The interval 32–39 (GSQSSGKS) is G1 motif. 32–40 (GSQSSGKSS) is a binding site for GTP. Residues 58–60 (VTR) are G2 motif. The segment at 138 to 141 (DLPG) is G3 motif. Residues 207-210 (TKLD) form a G4 motif region. GTP is bound by residues 207–213 (TKLDLMD) and 238–241 (NRSQ). The segment at 237-240 (INRS) is G5 motif. 2 stretches are compositionally biased toward low complexity: residues 523-569 (DQYQ…QQNQ) and 590-607 (PAQQ…KGPQ). The interval 523 to 738 (DQYQQQQQQQ…RYQDDFYGRG (216 aa)) is disordered. Residues 610 to 624 (PPNQSKPSSIPQNGP) are compositionally biased toward polar residues. Composition is skewed to low complexity over residues 625-635 (NNNNNNNNNNN) and 664-728 (NNSN…SSYN). A GED domain is found at 762 to 853 (TELIRELLIS…IINEIRDFRN (92 aa)).

It belongs to the TRAFAC class dynamin-like GTPase superfamily. Dynamin/Fzo/YdjA family.

Its subcellular location is the cytoplasm. Function in membrane trafficking processes along the endo-lysosomal pathway. The protein is Dynamin-A (dymA) of Dictyostelium discoideum (Social amoeba).